The following is a 1278-amino-acid chain: Mediator of RNA polymerase II transcription subunit 16 (1278 aa).

Over residues M1–V10 the composition is skewed to acidic residues. 3 disordered regions span residues M1 to I21, T530 to K557, and S839 to T861. Residues A547–K557 are compositionally biased toward basic and acidic residues. The span at G841 to T861 shows a compositional bias: polar residues.

Belongs to the plant Mediator complex subunit 16 family. In terms of assembly, component of the Mediator complex.

The protein localises to the nucleus. Functionally, component of the Mediator complex, a coactivator involved in the regulated transcription of nearly all RNA polymerase II-dependent genes. Mediator functions as a bridge to convey information from gene-specific regulatory proteins to the basal RNA polymerase II transcription machinery. The Mediator complex, having a compact conformation in its free form, is recruited to promoters by direct interactions with regulatory proteins and serves for the assembly of a functional preinitiation complex with RNA polymerase II and the general transcription factors. Involved in the regulation of the circadian clock, in the control of flowering time, in freezing- and osmotic-stress tolerance and in both salicylic acid- and jasmonate-mediated defense gene expression. The chain is Mediator of RNA polymerase II transcription subunit 16 (MED16) from Arabidopsis thaliana (Mouse-ear cress).